We begin with the raw amino-acid sequence, 869 residues long: DNA mismatch repair protein MutS (869 aa).

An ATP-binding site is contributed by G602–S609.

Belongs to the DNA mismatch repair MutS family.

In terms of biological role, this protein is involved in the repair of mismatches in DNA. It is possible that it carries out the mismatch recognition step. This protein has a weak ATPase activity. This chain is DNA mismatch repair protein MutS, found in Staphylococcus carnosus (strain TM300).